Here is a 65-residue protein sequence, read N- to C-terminus: Large ribosomal subunit protein uL29 (65 aa).

The protein belongs to the universal ribosomal protein uL29 family.

The protein is Large ribosomal subunit protein uL29 of Lactobacillus acidophilus (strain ATCC 700396 / NCK56 / N2 / NCFM).